Consider the following 190-residue polypeptide: Adenine phosphoribosyltransferase (190 aa).

It belongs to the purine/pyrimidine phosphoribosyltransferase family. In terms of assembly, homodimer.

The protein resides in the cytoplasm. It carries out the reaction AMP + diphosphate = 5-phospho-alpha-D-ribose 1-diphosphate + adenine. It functions in the pathway purine metabolism; AMP biosynthesis via salvage pathway; AMP from adenine: step 1/1. Catalyzes a salvage reaction resulting in the formation of AMP, that is energically less costly than de novo synthesis. This chain is Adenine phosphoribosyltransferase, found in Treponema pallidum (strain Nichols).